The primary structure comprises 308 residues: Ribosomal RNA small subunit methyltransferase H (308 aa).

S-adenosyl-L-methionine is bound by residues 32–34, Asp52, Phe78, Asp100, and Gln107; that span reads GGH.

It belongs to the methyltransferase superfamily. RsmH family.

It localises to the cytoplasm. It catalyses the reaction cytidine(1402) in 16S rRNA + S-adenosyl-L-methionine = N(4)-methylcytidine(1402) in 16S rRNA + S-adenosyl-L-homocysteine + H(+). Functionally, specifically methylates the N4 position of cytidine in position 1402 (C1402) of 16S rRNA. This is Ribosomal RNA small subunit methyltransferase H from Legionella pneumophila (strain Paris).